Consider the following 311-residue polypeptide: tRNA(Ile)-lysidine synthase (311 aa).

31–36 lines the ATP pocket; sequence SGGKDS.

This sequence belongs to the tRNA(Ile)-lysidine synthase family.

The protein resides in the cytoplasm. It catalyses the reaction cytidine(34) in tRNA(Ile2) + L-lysine + ATP = lysidine(34) in tRNA(Ile2) + AMP + diphosphate + H(+). In terms of biological role, ligates lysine onto the cytidine present at position 34 of the AUA codon-specific tRNA(Ile) that contains the anticodon CAU, in an ATP-dependent manner. Cytidine is converted to lysidine, thus changing the amino acid specificity of the tRNA from methionine to isoleucine. The sequence is that of tRNA(Ile)-lysidine synthase from Petrotoga mobilis (strain DSM 10674 / SJ95).